Consider the following 711-residue polypeptide: Polyribonucleotide nucleotidyltransferase (711 aa).

Positions 486 and 492 each coordinate Mg(2+). In terms of domain architecture, KH spans 553-612 (PRIHTIKINPDKIKDVIGKGGSVIRALTEETGTTIEIEDDGTVKIAATDGEKAKNAIRRI). One can recognise an S1 motif domain in the interval 622–690 (GRVYNGKVTR…RQGRIRLSIK (69 aa)). Positions 689 to 711 (IKEATEQSQPAAAPEAPAAEQGE) are disordered. A compositionally biased stretch (low complexity) spans 694-711 (EQSQPAAAPEAPAAEQGE).

It belongs to the polyribonucleotide nucleotidyltransferase family. In terms of assembly, component of the RNA degradosome, which is a multiprotein complex involved in RNA processing and mRNA degradation. It depends on Mg(2+) as a cofactor.

It is found in the cytoplasm. The enzyme catalyses RNA(n+1) + phosphate = RNA(n) + a ribonucleoside 5'-diphosphate. In terms of biological role, involved in mRNA degradation. Catalyzes the phosphorolysis of single-stranded polyribonucleotides processively in the 3'- to 5'-direction. In Escherichia fergusonii (strain ATCC 35469 / DSM 13698 / CCUG 18766 / IAM 14443 / JCM 21226 / LMG 7866 / NBRC 102419 / NCTC 12128 / CDC 0568-73), this protein is Polyribonucleotide nucleotidyltransferase.